A 194-amino-acid chain; its full sequence is Thioredoxin peroxidase (194 aa).

Residues 2–160 (LQPNMPAPNF…ALRLLDAFIF (159 aa)) enclose the Thioredoxin domain. The active-site Cysteine sulfenic acid (-SOH) intermediate is Cys47.

This sequence belongs to the peroxiredoxin family. AhpC/Prx1 subfamily. Homodimer; disulfide-linked, upon oxidation.

It carries out the reaction a hydroperoxide + [thioredoxin]-dithiol = an alcohol + [thioredoxin]-disulfide + H2O. Functionally, antioxidant. Could be involved in protection against reactive oxygen species (ROS) generated by metabolic processes and/or protection of the parasite against ROS released by immune effector cells. In terms of biological role, thiol-specific peroxidase that catalyzes the reduction of hydrogen peroxide and organic hydroperoxides to water and alcohols, respectively. Plays a role in cell protection against oxidative stress by detoxifying peroxides and as sensor of hydrogen peroxide-mediated signaling events. The sequence is that of Thioredoxin peroxidase from Fasciola hepatica (Liver fluke).